A 727-amino-acid polypeptide reads, in one-letter code: NADH-ubiquinone oxidoreductase 75 kDa subunit, mitochondrial (727 aa).

Residues 1 to 23 (MLRIPVRKALVGLSKSPKGCVRT) constitute a mitochondrion transit peptide. Residues 30–108 (NLIEVFVDGQ…GWNILTNSEK (79 aa)) form the 2Fe-2S ferredoxin-type domain. Residues C64, C75, and C78 each coordinate [2Fe-2S] cluster. An N6-acetyllysine modification is found at K84. C92 contributes to the [2Fe-2S] cluster binding site. Residues 108–147 (KSKKAREGVMELLLANHPLDCPICDQGGECDLQDQSMMFG) form the 4Fe-4S His(Cys)3-ligated-type domain. [4Fe-4S] cluster contacts are provided by H124, C128, C131, C137, C176, C179, C182, and C226. In terms of domain architecture, 4Fe-4S Mo/W bis-MGD-type spans 245 to 301 (TRKTESIDVMDAVGSNIVVSTRTGEVMRILPRMHEDINEEWISDKTRFAYDGLKRQR). K467, K499, and K709 each carry N6-acetyllysine.

It belongs to the complex I 75 kDa subunit family. Core subunit of respiratory chain NADH dehydrogenase (Complex I) which is composed of 45 different subunits. This is the largest subunit of complex I and it is a component of the iron-sulfur (IP) fragment of the enzyme. Complex I associates with ubiquinol-cytochrome reductase complex (Complex III) to form supercomplexes. Interacts with MDM2 and AKAP1. [2Fe-2S] cluster is required as a cofactor. It depends on [4Fe-4S] cluster as a cofactor.

It is found in the mitochondrion inner membrane. The enzyme catalyses a ubiquinone + NADH + 5 H(+)(in) = a ubiquinol + NAD(+) + 4 H(+)(out). In terms of biological role, core subunit of the mitochondrial membrane respiratory chain NADH dehydrogenase (Complex I) which catalyzes electron transfer from NADH through the respiratory chain, using ubiquinone as an electron acceptor. Essential for catalysing the entry and efficient transfer of electrons within complex I. Plays a key role in the assembly and stability of complex I and participates in the association of complex I with ubiquinol-cytochrome reductase complex (Complex III) to form supercomplexes. In Pongo abelii (Sumatran orangutan), this protein is NADH-ubiquinone oxidoreductase 75 kDa subunit, mitochondrial (NDUFS1).